Consider the following 874-residue polypeptide: DNA primase (874 aa).

The CHC2-type zinc finger occupies 786 to 824 (CLRHTHRASSKNVRVFLVLYYTSQAITVTFMSQCFAGRC). Residues 848–857 (ASQDSTTSQL) are compositionally biased toward polar residues. A disordered region spans residues 848 to 874 (ASQDSTTSQLARRRDRQDGSFSETLPN).

This sequence belongs to the herpesviridae DNA primase family. As to quaternary structure, associates with the helicase and the primase-associated factor to form the helicase-primase factor.

The protein resides in the host nucleus. Functionally, essential component of the helicase/primase complex. Unwinds the DNA at the replication forks and generates single-stranded DNA for both leading and lagging strand synthesis. The primase initiates primer synthesis and thereby produces large amount of short RNA primers on the lagging strand that the polymerase elongates using dNTPs. This is DNA primase from Epstein-Barr virus (strain B95-8) (HHV-4).